A 333-amino-acid chain; its full sequence is Glutamyl endopeptidase (333 aa).

A signal peptide spans 1–29 (MKGKFLKVSSLFVATLTTATLVSSPAANA). Positions 30-68 (LSSKAMDNHPQQSQSSKQQTPKIQKGGNLKPLEQREHAN) are excised as a propeptide. A disordered region spans residues 33 to 61 (KAMDNHPQQSQSSKQQTPKIQKGGNLKPL). A compositionally biased stretch (low complexity) spans 40-54 (QQSQSSKQQTPKIQK). Active-site charge relay system residues include His-119, Asp-161, and Ser-237. Positions 283–333 (FANDDQPNNPDNPDNPNNPDNPNNPDNPNNPNNPDNPDNGDNNNSDNPDAA) are disordered. The span at 286–333 (DDQPNNPDNPDNPNNPDNPNNPDNPNNPNNPDNPDNGDNNNSDNPDAA) shows a compositional bias: low complexity. A run of 11 repeats spans residues 289–291 (PNN), 292–294 (PDN), 295–297 (PDN), 298–300 (PNN), 301–303 (PDN), 304–306 (PNN), 307–309 (PDN), 310–312 (PNN), 313–315 (PNN), 316–318 (PDN), and 319–321 (PDN). The interval 289–321 (PNNPDNPDNPNNPDNPNNPDNPNNPNNPDNPDN) is 11 X 3 AA repeats of P-[DN]-N.

This sequence belongs to the peptidase S1B family. Post-translationally, proteolytically cleaved by aureolysin (aur). This cleavage leads to the activation of SspA.

Its subcellular location is the secreted. The enzyme catalyses Preferential cleavage: Glu-|-Xaa, Asp-|-Xaa.. Its function is as follows. Preferentially cleaves peptide bonds on the carboxyl-terminal side of aspartate and glutamate. Along with other extracellular proteases it is involved in colonization and infection of human tissues. Required for proteolytic maturation of thiol protease SspB and inactivation of SspC, an inhibitor of SspB. It is the most important protease for degradation of fibronectin-binding protein (FnBP) and surface protein A, which are involved in adherence to host cells. May also protect bacteria against host defense mechanism by cleaving the immunoglobulin classes IgG, IgA and IgM. May be involved in the stability of secreted lipases. This is Glutamyl endopeptidase (sspA) from Staphylococcus aureus (strain MSSA476).